Consider the following 308-residue polypeptide: uncharacterized protein (308 aa).

The next 7 helical transmembrane spans lie at 10-30 (IILL…TNLI), 91-111 (LPTI…VVIL), 115-135 (LGLI…LIGI), 178-198 (VIPM…LGLM), 219-239 (ITVL…VDIL), 251-271 (LIVL…KHSI), and 288-308 (INYT…IAFF).

The protein to M.jannaschii MJ0871, MJ1556 and MJ1589.

Its subcellular location is the cell membrane. This is an uncharacterized protein from Methanocaldococcus jannaschii (strain ATCC 43067 / DSM 2661 / JAL-1 / JCM 10045 / NBRC 100440) (Methanococcus jannaschii).